A 341-amino-acid polypeptide reads, in one-letter code: Elongation factor Ts (341 aa).

The segment at Thr80–Val83 is involved in Mg(2+) ion dislocation from EF-Tu.

Belongs to the EF-Ts family.

The protein localises to the cytoplasm. Functionally, associates with the EF-Tu.GDP complex and induces the exchange of GDP to GTP. It remains bound to the aminoacyl-tRNA.EF-Tu.GTP complex up to the GTP hydrolysis stage on the ribosome. The chain is Elongation factor Ts from Lactobacillus acidophilus (strain ATCC 700396 / NCK56 / N2 / NCFM).